A 278-amino-acid polypeptide reads, in one-letter code: Pantothenate synthetase (278 aa).

Position 26–33 (26–33) interacts with ATP; sequence MGNLHEGH. H33 functions as the Proton donor in the catalytic mechanism. Position 57 (Q57) interacts with (R)-pantoate. Beta-alanine is bound at residue Q57. An ATP-binding site is contributed by 144-147; the sequence is GKKD. Position 150 (Q150) interacts with (R)-pantoate. ATP contacts are provided by residues G173 and 181–184; that span reads LSSR.

This sequence belongs to the pantothenate synthetase family. Homodimer.

Its subcellular location is the cytoplasm. The enzyme catalyses (R)-pantoate + beta-alanine + ATP = (R)-pantothenate + AMP + diphosphate + H(+). The protein operates within cofactor biosynthesis; (R)-pantothenate biosynthesis; (R)-pantothenate from (R)-pantoate and beta-alanine: step 1/1. Catalyzes the condensation of pantoate with beta-alanine in an ATP-dependent reaction via a pantoyl-adenylate intermediate. This Neisseria meningitidis serogroup C / serotype 2a (strain ATCC 700532 / DSM 15464 / FAM18) protein is Pantothenate synthetase.